The chain runs to 259 residues: MRIDVISLFPEFIAQCAAFGVVGRAQERGLLELQGWNPREHAQGNYRRVDDRPFGGGPGMVMLIEPLRACLDAVQAADARPAPVIYFSPQGRRLTQMLARELAQLPRMVLLCGRYEGVDERFLAQAVDMEISIGDYVLSGGELGAAVVVDVVTRLQEGVLNDAESAAQDSFEGPQGLLDCPHYSHPSSHAWGDVPEVLRSGNHAAIARWRRQQSLGRTWLRRPDLLDEAGLDKHDRRLLEEFRRELAKGDEESGCTPSP.

Residues Gly-113 and 133 to 138 (IGDYVL) each bind S-adenosyl-L-methionine.

It belongs to the RNA methyltransferase TrmD family. As to quaternary structure, homodimer.

The protein resides in the cytoplasm. It carries out the reaction guanosine(37) in tRNA + S-adenosyl-L-methionine = N(1)-methylguanosine(37) in tRNA + S-adenosyl-L-homocysteine + H(+). Its function is as follows. Specifically methylates guanosine-37 in various tRNAs. The chain is tRNA (guanine-N(1)-)-methyltransferase from Xanthomonas oryzae pv. oryzae (strain MAFF 311018).